A 308-amino-acid polypeptide reads, in one-letter code: MPPDREEAGRRPAAILIAGPTASGKSALAARLAERHGGVVINTDSMQVYADLRRLTARPDPDEEARVPHRLYGHVDGAVNYSAGHFSRDAAALLATLGGRLPVFVGGTGLYFRALEQGFSELPPVPDTVRARVRDAAEGRPTEALHADLARHDPEGAARLRPSDRMRVMRALEIFLATGRPIASFYGDPVPGPLAGRDLRRIFLAPDRAALRERIDARFRTMIAEGALDEVARLRARRLDPMLPVMRAHGVPGLIAHLDGALSLDEAIARGQADTRAYAKRQLTWFRHQMGEAWRWVDPEGATVEDLL.

19–26 (GPTASGKS) provides a ligand contact to ATP. Residue 21–26 (TASGKS) participates in substrate binding. An interaction with substrate tRNA region spans residues 44 to 47 (DSMQ).

It belongs to the IPP transferase family. In terms of assembly, monomer. Mg(2+) is required as a cofactor.

The enzyme catalyses adenosine(37) in tRNA + dimethylallyl diphosphate = N(6)-dimethylallyladenosine(37) in tRNA + diphosphate. Functionally, catalyzes the transfer of a dimethylallyl group onto the adenine at position 37 in tRNAs that read codons beginning with uridine, leading to the formation of N6-(dimethylallyl)adenosine (i(6)A). The chain is tRNA dimethylallyltransferase from Methylobacterium radiotolerans (strain ATCC 27329 / DSM 1819 / JCM 2831 / NBRC 15690 / NCIMB 10815 / 0-1).